The sequence spans 183 residues: Threonylcarbamoyl-AMP synthase (183 aa).

In terms of domain architecture, YrdC-like spans 1–183 (MNREQIADAL…LRTNQLFRQG (183 aa)).

The protein belongs to the SUA5 family. TsaC subfamily.

It is found in the cytoplasm. It catalyses the reaction L-threonine + hydrogencarbonate + ATP = L-threonylcarbamoyladenylate + diphosphate + H2O. Functionally, required for the formation of a threonylcarbamoyl group on adenosine at position 37 (t(6)A37) in tRNAs that read codons beginning with adenine. Catalyzes the conversion of L-threonine, HCO(3)(-)/CO(2) and ATP to give threonylcarbamoyl-AMP (TC-AMP) as the acyladenylate intermediate, with the release of diphosphate. This Haemophilus influenzae (strain ATCC 51907 / DSM 11121 / KW20 / Rd) protein is Threonylcarbamoyl-AMP synthase.